A 610-amino-acid chain; its full sequence is Elongation factor 4 (610 aa).

The tr-type G domain occupies 13-195 (SHIRNFSIVA…AIVHKLPAPK (183 aa)). GTP-binding positions include 25–30 (DHGKST) and 142–145 (NKID).

The protein belongs to the TRAFAC class translation factor GTPase superfamily. Classic translation factor GTPase family. LepA subfamily.

The protein resides in the cell inner membrane. It carries out the reaction GTP + H2O = GDP + phosphate + H(+). Required for accurate and efficient protein synthesis under certain stress conditions. May act as a fidelity factor of the translation reaction, by catalyzing a one-codon backward translocation of tRNAs on improperly translocated ribosomes. Back-translocation proceeds from a post-translocation (POST) complex to a pre-translocation (PRE) complex, thus giving elongation factor G a second chance to translocate the tRNAs correctly. Binds to ribosomes in a GTP-dependent manner. The chain is Elongation factor 4 from Rhizobium etli (strain ATCC 51251 / DSM 11541 / JCM 21823 / NBRC 15573 / CFN 42).